The primary structure comprises 796 residues: Transcription factor kayak (796 aa).

Disordered regions lie at residues 109–132 (AYQQ…SNTS), 315–341 (VVNN…SNTV), 374–429 (FNCG…GSNG), and 442–490 (VGSA…RNKL). The span at 402 to 429 (TTDTSSAATDSTSYQNGGHMFGNNGSNG) shows a compositional bias: low complexity. Over residues 447–457 (RGTSSTSNNAT) the composition is skewed to polar residues. The region spanning 478–541 (EEKRRVRRER…HQLNFVLEAH (64 aa)) is the bZIP domain. A basic motif region spans residues 480 to 499 (KRRVRRERNKLAAARCRKRR). The interval 506–534 (LSEEVDGLLKKNEDLKKEIEILTNTRHQL) is leucine-zipper. The interval 569–601 (SSGSNGSHHHNSNSNNSNNNNSNNNNNSNSNDS) is disordered. S621 is modified (phosphoserine). Disordered stretches follow at residues 642–661 (PHDA…PPAA) and 774–796 (SSQN…LVSL).

It belongs to the bZIP family. Fos subfamily. Homodimer. Heterodimer with Jra. The kay-Jra heterodimer binds more stably to the AP-1 site than either of the two proteins alone.

It localises to the nucleus. Its function is as follows. Developmentally regulated transcription factor AP-1 binds and recognizes the enhancer DNA sequence: 5'-TGA[CG]TCA-3'. May play a role in the function or determination of a particular subset of cells in the developing embryo. It is able to carry out its function either independently of or in conjunction with Jra. The protein is Transcription factor kayak of Drosophila grimshawi (Hawaiian fruit fly).